The primary structure comprises 312 residues: ADP-L-glycero-D-manno-heptose-6-epimerase (312 aa).

Residues 10-11, 31-32, lysine 38, lysine 53, 75-79, and asparagine 92 contribute to the NADP(+) site; these read FI, DN, and EGACS. The active-site Proton acceptor is the tyrosine 140. Lysine 144 lines the NADP(+) pocket. Asparagine 169 provides a ligand contact to substrate. 2 residues coordinate NADP(+): valine 170 and lysine 178. Lysine 178 (proton acceptor) is an active-site residue. Substrate contacts are provided by residues serine 180, histidine 187, 201 to 204, arginine 209, and tyrosine 274; that span reads FAGS.

This sequence belongs to the NAD(P)-dependent epimerase/dehydratase family. HldD subfamily. In terms of assembly, homopentamer. NADP(+) serves as cofactor.

The catalysed reaction is ADP-D-glycero-beta-D-manno-heptose = ADP-L-glycero-beta-D-manno-heptose. The protein operates within nucleotide-sugar biosynthesis; ADP-L-glycero-beta-D-manno-heptose biosynthesis; ADP-L-glycero-beta-D-manno-heptose from D-glycero-beta-D-manno-heptose 7-phosphate: step 4/4. Its pathway is bacterial outer membrane biogenesis; LPS core biosynthesis. Functionally, catalyzes the interconversion between ADP-D-glycero-beta-D-manno-heptose and ADP-L-glycero-beta-D-manno-heptose via an epimerization at carbon 6 of the heptose. The protein is ADP-L-glycero-D-manno-heptose-6-epimerase of Photorhabdus laumondii subsp. laumondii (strain DSM 15139 / CIP 105565 / TT01) (Photorhabdus luminescens subsp. laumondii).